The following is a 398-amino-acid chain: Interleukin-1 receptor type 2 (398 aa).

Positions Met-1 to Ala-13 are cleaved as a signal peptide. The Extracellular portion of the chain corresponds to Phe-14 to Glu-343. 3 consecutive Ig-like C2-type domains span residues Pro-18–Arg-124, Pro-134–Ser-223, and Pro-237–Ser-349. Cystine bridges form between Cys-28–Cys-116, Cys-50–Cys-108, and Cys-152–Cys-207. Residues Asn-66, Asn-72, and Asn-112 are each glycosylated (N-linked (GlcNAc...) asparagine). N-linked (GlcNAc...) asparagine glycans are attached at residues Asn-219 and Asn-277. The cysteines at positions 258 and 326 are disulfide-linked. The segment at His-329 to Glu-343 is contains proteolytic cleavage site. A helical membrane pass occupies residues Ala-344–Met-369. Residues His-370–Lys-398 lie on the Cytoplasmic side of the membrane.

This sequence belongs to the interleukin-1 receptor family. In terms of assembly, associates with IL1RAP to form a non-signaling interleukin-1 receptor complex. In terms of processing, a soluble form (sIL1R2) can also be produced by proteolytic cleavage at the cell surface (shedding) involving a metalloproteinase; hovever, several sIL1R2 forms ranging from 45 and 60 kDa are reported.

The protein resides in the secreted. Its subcellular location is the cell membrane. In terms of biological role, non-signaling receptor for IL1A, IL1B and IL1RN. Reduces IL1B activities. Serves as a decoy receptor by competitive binding to IL1B and preventing its binding to IL1R1. Also modulates cellular response through non-signaling association with IL1RAP after binding to IL1B. IL1R2 (membrane and secreted forms) preferentially binds IL1B and poorly IL1A and IL1RN. The secreted IL1R2 recruits secreted IL1RAP with high affinity; this complex formation may be the dominant mechanism for neutralization of IL1B by secreted/soluble receptors. The chain is Interleukin-1 receptor type 2 (IL1R2) from Homo sapiens (Human).